The following is an 805-amino-acid chain: 1,4-alpha-glucan-branching enzyme 2-2, chloroplastic/amyloplastic (805 aa).

Residues 1-32 constitute a chloroplast transit peptide; that stretch reads MVVIHGVSLTPRFTLPSRPLNTGFNAGNSTLS. Asp451 acts as the Nucleophile in catalysis. The active-site Proton donor is Glu506.

Belongs to the glycosyl hydrolase 13 family. GlgB subfamily. Monomer. In terms of tissue distribution, expressed in seedlings, roots, stems, leaves, inflorescences, seeds and flowers.

It is found in the plastid. The protein localises to the chloroplast stroma. The protein resides in the amyloplast. The catalysed reaction is Transfers a segment of a (1-&gt;4)-alpha-D-glucan chain to a primary hydroxy group in a similar glucan chain.. Its pathway is glycan biosynthesis; starch biosynthesis. Its function is as follows. Catalyzes the formation of the alpha-1,6-glucosidic linkages in starch by scission of a 1,4-alpha-linked oligosaccharide from growing alpha-1,4-glucan chains and the subsequent attachment of the oligosaccharide to the alpha-1,6 position. This Arabidopsis thaliana (Mouse-ear cress) protein is 1,4-alpha-glucan-branching enzyme 2-2, chloroplastic/amyloplastic (SBE2.2).